We begin with the raw amino-acid sequence, 186 residues long: dCTP deaminase (186 aa).

Lys107–Arg112 is a binding site for dCTP. Glu133 functions as the Proton donor/acceptor in the catalytic mechanism. Residues Gln152, Tyr166, and Gln176 each contribute to the dCTP site.

Belongs to the dCTP deaminase family. Homotrimer.

The enzyme catalyses dCTP + H2O + H(+) = dUTP + NH4(+). Its pathway is pyrimidine metabolism; dUMP biosynthesis; dUMP from dCTP (dUTP route): step 1/2. Functionally, catalyzes the deamination of dCTP to dUTP. In Chloroflexus aggregans (strain MD-66 / DSM 9485), this protein is dCTP deaminase.